Here is a 140-residue protein sequence, read N- to C-terminus: ATP synthase epsilon chain (140 aa).

The protein belongs to the ATPase epsilon chain family. F-type ATPases have 2 components, CF(1) - the catalytic core - and CF(0) - the membrane proton channel. CF(1) has five subunits: alpha(3), beta(3), gamma(1), delta(1), epsilon(1). CF(0) has three main subunits: a, b and c.

It is found in the cell inner membrane. In terms of biological role, produces ATP from ADP in the presence of a proton gradient across the membrane. In Xanthomonas oryzae pv. oryzae (strain PXO99A), this protein is ATP synthase epsilon chain.